Here is an 861-residue protein sequence, read N- to C-terminus: Benzylsuccinate synthase alpha subunit (861 aa).

In terms of domain architecture, PFL spans 40-712; that stretch reads TERTRRLKAR…QAVGLYMEVG (673 aa). A disordered region spans residues 718–744; the sequence is TPDGRFGGEAADDGGISPYSGTDKKGP. The region spanning 731–850 is the Glycine radical domain; it reads GGISPYSGTD…IIARNEQNFN (120 aa). The residue at position 825 (Gly825) is a Glycine radical.

This sequence belongs to the glycyl radical enzyme (GRE) family. BSS subfamily. As to quaternary structure, heterohexamer composed of 2 alpha subunits, 2 beta subunits and 2 gamma subunits.

The enzyme catalyses toluene + fumarate = 2-benzylsuccinate. It functions in the pathway xenobiotic degradation; toluene degradation. Its activity is regulated as follows. Activated by the benzylsuccinate synthase activating enzyme BssD. Rapidly inactivated by oxygen. Functionally, catalyzes the addition of fumarate to the methyl group of toluene, leading to the formation of benzylsuccinate. In Thauera aromatica, this protein is Benzylsuccinate synthase alpha subunit (bssA).